The chain runs to 95 residues: Phosphoribosyl-ATP pyrophosphatase (95 aa).

It belongs to the PRA-PH family.

It localises to the cytoplasm. It catalyses the reaction 1-(5-phospho-beta-D-ribosyl)-ATP + H2O = 1-(5-phospho-beta-D-ribosyl)-5'-AMP + diphosphate + H(+). The protein operates within amino-acid biosynthesis; L-histidine biosynthesis; L-histidine from 5-phospho-alpha-D-ribose 1-diphosphate: step 2/9. The protein is Phosphoribosyl-ATP pyrophosphatase of Halobacterium salinarum (strain ATCC 29341 / DSM 671 / R1).